A 311-amino-acid polypeptide reads, in one-letter code: Aspartate carbamoyltransferase catalytic subunit (311 aa).

Residues arginine 55 and threonine 56 each contribute to the carbamoyl phosphate site. Lysine 85 provides a ligand contact to L-aspartate. Residues arginine 106, histidine 135, and glutamine 138 each contribute to the carbamoyl phosphate site. L-aspartate contacts are provided by arginine 168 and arginine 230. The carbamoyl phosphate site is built by leucine 268 and proline 269.

Belongs to the aspartate/ornithine carbamoyltransferase superfamily. ATCase family. In terms of assembly, heterododecamer (2C3:3R2) of six catalytic PyrB chains organized as two trimers (C3), and six regulatory PyrI chains organized as three dimers (R2).

It carries out the reaction carbamoyl phosphate + L-aspartate = N-carbamoyl-L-aspartate + phosphate + H(+). It participates in pyrimidine metabolism; UMP biosynthesis via de novo pathway; (S)-dihydroorotate from bicarbonate: step 2/3. In terms of biological role, catalyzes the condensation of carbamoyl phosphate and aspartate to form carbamoyl aspartate and inorganic phosphate, the committed step in the de novo pyrimidine nucleotide biosynthesis pathway. The sequence is that of Aspartate carbamoyltransferase catalytic subunit from Yersinia pseudotuberculosis serotype O:1b (strain IP 31758).